The following is a 185-amino-acid chain: Cytidylate kinase (185 aa).

8 to 16 (GPPGSGKTT) lines the ATP pocket.

The protein belongs to the cytidylate kinase family. Type 2 subfamily.

It is found in the cytoplasm. It catalyses the reaction CMP + ATP = CDP + ADP. The catalysed reaction is dCMP + ATP = dCDP + ADP. This Desulfurococcus amylolyticus (strain DSM 18924 / JCM 16383 / VKM B-2413 / 1221n) (Desulfurococcus kamchatkensis) protein is Cytidylate kinase.